Consider the following 194-residue polypeptide: Small ribosomal subunit protein uS11m (194 aa).

It belongs to the universal ribosomal protein uS11 family. In terms of assembly, component of the mitochondrial small ribosomal subunit (mt-SSU). Mature mammalian 55S mitochondrial ribosomes consist of a small (28S) and a large (39S) subunit. The 28S small subunit contains a 12S ribosomal RNA (12S mt-rRNA) and 30 different proteins. The 39S large subunit contains a 16S rRNA (16S mt-rRNA), a copy of mitochondrial valine transfer RNA (mt-tRNA(Val)), which plays an integral structural role, and 52 different proteins.

It is found in the mitochondrion. This Homo sapiens (Human) protein is Small ribosomal subunit protein uS11m (MRPS11).